Reading from the N-terminus, the 103-residue chain is Cell division protein FtsB (103 aa).

Residues Met1 to Lys3 lie on the Cytoplasmic side of the membrane. A helical transmembrane segment spans residues Leu4 to Phe21. Residues Gly22–Arg103 are Periplasmic-facing. The stretch at Asp28 to Ala71 forms a coiled coil.

The protein belongs to the FtsB family. In terms of assembly, part of a complex composed of FtsB, FtsL and FtsQ.

It is found in the cell inner membrane. Its function is as follows. Essential cell division protein. May link together the upstream cell division proteins, which are predominantly cytoplasmic, with the downstream cell division proteins, which are predominantly periplasmic. This is Cell division protein FtsB from Shigella flexneri serotype 5b (strain 8401).